Reading from the N-terminus, the 717-residue chain is Fatty acid oxidation complex subunit alpha (717 aa).

The interval 1–190 (MIHAGNAITV…KDGAVDAVVA (190 aa)) is enoyl-CoA hydratase/isomerase. Position 298 (Asp298) interacts with substrate. The segment at 313–717 (HPVNQAAVLG…MAANNKKFYG (405 aa)) is 3-hydroxyacyl-CoA dehydrogenase. NAD(+) is bound by residues Met326, Asp345, 402–404 (VTE), Lys409, and Ser431. His452 serves as the catalytic For 3-hydroxyacyl-CoA dehydrogenase activity. NAD(+) is bound at residue Asn455. Asn502 contributes to the substrate binding site.

It in the N-terminal section; belongs to the enoyl-CoA hydratase/isomerase family. In the C-terminal section; belongs to the 3-hydroxyacyl-CoA dehydrogenase family. Heterotetramer of two alpha chains (FadB) and two beta chains (FadA).

The catalysed reaction is a (3S)-3-hydroxyacyl-CoA + NAD(+) = a 3-oxoacyl-CoA + NADH + H(+). It carries out the reaction a (3S)-3-hydroxyacyl-CoA = a (2E)-enoyl-CoA + H2O. It catalyses the reaction a 4-saturated-(3S)-3-hydroxyacyl-CoA = a (3E)-enoyl-CoA + H2O. The enzyme catalyses (3S)-3-hydroxybutanoyl-CoA = (3R)-3-hydroxybutanoyl-CoA. The catalysed reaction is a (3Z)-enoyl-CoA = a 4-saturated (2E)-enoyl-CoA. It carries out the reaction a (3E)-enoyl-CoA = a 4-saturated (2E)-enoyl-CoA. Its pathway is lipid metabolism; fatty acid beta-oxidation. Functionally, involved in the aerobic and anaerobic degradation of long-chain fatty acids via beta-oxidation cycle. Catalyzes the formation of 3-oxoacyl-CoA from enoyl-CoA via L-3-hydroxyacyl-CoA. It can also use D-3-hydroxyacyl-CoA and cis-3-enoyl-CoA as substrate. This is Fatty acid oxidation complex subunit alpha from Acinetobacter baumannii (strain ACICU).